The primary structure comprises 130 residues: Small ribosomal subunit protein uS11 (130 aa).

The protein belongs to the universal ribosomal protein uS11 family. In terms of assembly, part of the 30S ribosomal subunit. Interacts with proteins S7 and S18. Binds to IF-3.

Its function is as follows. Located on the platform of the 30S subunit, it bridges several disparate RNA helices of the 16S rRNA. Forms part of the Shine-Dalgarno cleft in the 70S ribosome. The sequence is that of Small ribosomal subunit protein uS11 from Teredinibacter turnerae (strain ATCC 39867 / T7901).